The primary structure comprises 163 residues: Small ribosomal subunit protein uS9 (163 aa).

The segment covering 1–11 (MAENTNDSQVV) has biased composition (polar residues). The segment at 1–40 (MAENTNDSQVVETEEELTNYTTETNAGAGTGTSAIEPGYG) is disordered. Residues 18–27 (TNYTTETNAG) are compositionally biased toward low complexity.

Belongs to the universal ribosomal protein uS9 family.

In Bifidobacterium longum (strain DJO10A), this protein is Small ribosomal subunit protein uS9.